The sequence spans 891 residues: DNA mismatch repair protein MutS (891 aa).

634–641 (GPNMGGKS) lines the ATP pocket.

It belongs to the DNA mismatch repair MutS family.

Functionally, this protein is involved in the repair of mismatches in DNA. It is possible that it carries out the mismatch recognition step. This protein has a weak ATPase activity. This chain is DNA mismatch repair protein MutS, found in Burkholderia mallei (strain NCTC 10247).